The chain runs to 1282 residues: Cytokine receptor (1282 aa).

The N-terminal stretch at 1-23 is a signal peptide; it reads MVAQEQLVLLLMLLAGCRGGANA. The Extracellular portion of the chain corresponds to 24 to 889; it reads ILDPGWVIPS…CTPDTHSVKA (866 aa). Residues N44, N86, N87, and N114 are each glycosylated (N-linked (GlcNAc...) asparagine). A disulfide bridge links C47 with C106. Fibronectin type-III domains lie at 124-220, 227-327, 329-431, 436-535, 537-631, 635-735, and 736-836; these read PLLV…NHFE, PGQN…TAPA, PRRP…SNRD, EPRN…KKDD, AKME…TGEA, QPRE…TAIG, and VPSP…LMST. C132 and C142 form a disulfide bridge. N-linked (GlcNAc...) asparagine glycans are attached at residues N143 and N156. The cysteines at positions 173 and 183 are disulfide-linked. N-linked (GlcNAc...) asparagine glycans are attached at residues N184, N230, N235, N278, N298, N310, N376, N448, and N466. C472 and C482 form a disulfide bridge. N-linked (GlcNAc...) asparagine glycosylation is found at N568, N581, N626, N676, N703, N777, N790, and N862. The helical transmembrane segment at 890-910 threads the bilayer; that stretch reads MYQTIEVTVAILVLGVIFYLV. At 911-1282 the chain is on the cytoplasmic side; sequence YKKYRKMSDI…NAMAHNRHVL (372 aa). S976 carries the post-translational modification Phosphoserine. 2 disordered regions span residues 989–1092 and 1238–1258; these read TASS…HTFS and TVGS…QHSR. 2 stretches are compositionally biased toward basic and acidic residues: residues 999–1009 and 1033–1064; these read VDRDGYDDNHE and NDRE…DREQ.

The protein belongs to the type I cytokine receptor family. In terms of assembly, interacts with wdp; the interaction promotes internalization of dome and its subsequent lysosomal degradation; thereby reducing JAK/STAT signaling. Undergoes lysosomal degradation. In stage 11 embryos, tracheal pits show highest expression, at stage 14 high expression is detected in the posterior spiracles, gut and head.

It localises to the apicolateral cell membrane. Its function is as follows. Critical for epithelial morphogenesis during oogenesis; border cell migration. Required in the germarium for the polarization of follicle cells during encapsulation of germline cells. Required for embryonic segmentation and trachea specification. Essential receptor molecule for upd and JAK/STAT signaling during oogenesis. The protein is Cytokine receptor (dome) of Drosophila melanogaster (Fruit fly).